Reading from the N-terminus, the 396-residue chain is Period circadian protein (396 aa).

Disordered regions lie at residues 27–120 (VTAP…APPV), 164–188 (LEYS…WEGE), 253–273 (GGNG…TNQY), and 333–362 (SPSS…TSQA). A compositionally biased stretch (gly residues) spans 93-114 (GTSGTGNSGDGGGGGGANGTGS). The span at 253-262 (GGNGNVGSGN) shows a compositional bias: gly residues. Residues 333–342 (SPSSTNTNPN) show a composition bias toward low complexity.

Forms a heterodimer with timeless (TIM); the complex then translocates into the nucleus. Post-translationally, phosphorylated with a circadian rhythmicity, probably by the double-time protein (dbt). Phosphorylation could be implicated in the stability of per monomer and in the formation of heterodimer per-tim.

Its subcellular location is the nucleus. It is found in the cytoplasm. The protein localises to the perinuclear region. Functionally, essential for biological clock functions. Determines the period length of circadian and ultradian rhythms; an increase in PER dosage leads to shortened circadian rhythms and a decrease leads to lengthened circadian rhythms. Essential for the circadian rhythmicity of locomotor activity, eclosion behavior, and for the rhythmic component of the male courtship song that originates in the thoracic nervous system. The biological cycle depends on the rhythmic formation and nuclear localization of the TIM-PER complex. Light induces the degradation of TIM, which promotes elimination of PER. Nuclear activity of the heterodimer coordinatively regulates PER and TIM transcription through a negative feedback loop. Behaves as a negative element in circadian transcriptional loop. Does not appear to bind DNA, suggesting indirect transcriptional inhibition. This Drosophila pavlovskiana (Fruit fly) protein is Period circadian protein (per).